The chain runs to 378 residues: MPHSSLHPSIPQPRGLRAQKAALVLLSACLVALWGLGEPPDYTLKWLVLHLASQQMGLLIKGICSLAEELCHVHSRYHGSYWRAVRACLCSSMRCGALLLLSCYFYCSLPNMADLPFTWMLALLGLSQALNILLGLQGLAPAEVSAICEKRNFNVAHGLAWSYYIGYLRLILPGLPARIQIYNQFHNNTLQGAGSHRLHILFPLDCGVPDDLNVADPNIRFLHELPQQSADRAGIKGRVYTNSIYELLENGQRAGVCVLEYATPLQTLFAMSQDGRAGFSREDRLEQAKLFCRTLEDILANAPESQNNCRLIVYQEPAEGSSFSLSQEILQHLRQEEREVTMGSTETSVMPGSSVLSQEPELLISGLEKPLPLRSDVF.

The Cytoplasmic segment spans residues 1-17 (MPHSSLHPSIPQPRGLR). The segment at 1–190 (MPHSSLHPSI…IYNQFHNNTL (190 aa)) is mediates interaction with ZDHHC1 and ZDHHC11. The chain crosses the membrane as a helical span at residues 18–34 (AQKAALVLLSACLVALW). Residues 35 to 44 (GLGEPPDYTL) lie on the Lumenal side of the membrane. A helical transmembrane segment spans residues 45-69 (KWLVLHLASQQMGLLIKGICSLAEE). At 70–91 (LCHVHSRYHGSYWRAVRACLCS) the chain is on the cytoplasmic side. Cysteine 88 carries S-palmitoyl cysteine lipidation. The chain crosses the membrane as a helical span at residues 92 to 106 (SMRCGALLLLSCYFY). Topologically, residues 107-116 (CSLPNMADLP) are lumenal. A helical transmembrane segment spans residues 117 to 134 (FTWMLALLGLSQALNILL). The Cytoplasmic segment spans residues 135-378 (GLQGLAPAEV…KPLPLRSDVF (244 aa)). Lysine 150 participates in a covalent cross-link: Glycyl lysine isopeptide (Lys-Gly) (interchain with G-Cter in ubiquitin). The segment at 153-339 (FNVAHGLAWS…LQHLRQEERE (187 aa)) is cyclic dinucleotide-binding domain (CBD). 2',3'-cGAMP is bound by residues serine 162 and tyrosine 167. Residues serine 162 and tyrosine 167 each coordinate 3',3'-c-di-GMP. Tyrosine 167 contacts 2',3'-cUAMP. A Glycyl lysine isopeptide (Lys-Gly) (interchain with G-Cter in ubiquitin) cross-link involves residue lysine 236. 2',3'-cGAMP is bound by residues arginine 238 and threonine 263. The 2',3'-cUAMP site is built by arginine 238 and threonine 263. 3',3'-c-di-GMP contacts are provided by residues 238-241 (RVYT) and threonine 263. The tract at residues 339 to 378 (EVTMGSTETSVMPGSSVLSQEPELLISGLEKPLPLRSDVF) is C-terminal tail (CTT). Position 354 is a phosphoserine (serine 354). Phosphoserine; by TBK1 occurs at positions 357 and 365. A pLxIS motif motif is present at residues 362–365 (LLIS).

Belongs to the STING family. Homodimer; forms a homodimer in absence of cyclic nucleotide (c-di-GMP or cGAMP); 'Lys-63'-linked ubiquitination at Lys-150 is required for homodimerization. Homotetramer; in presence of cyclic nucleotide (c-di-GMP or cGAMP), forms tetramers and higher-order oligomers through side-by-side packing. Interacts (when phosphorylated) with IRF3; following activation and phosphorylation on the pLxIS motif by TBK1, recruits IRF3. Interacts with RIGI, MAVS and SSR2. Interacts with RNF5 and TRIM56. Interacts with TBK1; when homodimer, leading to subsequent production of IFN-beta. Interacts with IFIT1 and IFIT2. Interacts with TRIM29; this interaction induces STING1 ubiquitination and subsequent degradation. Associates with the MHC-II complex. Interacts with STEEP1; interaction takes place upon cGAMP-activation and STING1 phosphorylation by MAP3K7/TAK1 and promotes STING1 translocation to COPII vesicles. Interacts with SEC24A, SEC24B and SEC24C; promoting translocation to COPII vesicles. Interacts (when ubiquitinated) with SQSTM1; leading to relocalization to autophagosomes. Interacts with SURF4. Interacts with HNRNPA2B1. Interacts with ZDHHC1; ZDHHC1 constitutively interacts with STING1 and in presence of DNA viruses activates it by promoting its cGAMP-induced oligomerization and the recruitment of downstream signaling components. Interacts with ZDHHC11; in presence of DNA viruses promotes the recruitment of IRF3 to STING1. Interacts with TOMM70. Interacts with TAB1; promoting recruitment of TAB1 to the endoplasmic reticulum membrane and subsequent activation of MAP3K7/TAK1. Interacts (via transmembrane domain) with TMEM203. Interacts with DDX41. Post-translationally, phosphorylation by TBK1 leads to activation and production of IFN-beta. Following cyclic nucleotide (c-di-GMP or cGAMP)-binding, activation and translocation from the endoplasmic reticulum, STING1 is phosphorylated by TBK1 at Ser-365 in the pLxIS motif. The phosphorylated pLxIS motif constitutes an IRF3-binding motif, leading to recruitment of the transcription factor IRF3 to induce type-I interferons and other cytokines. Phosphorylated on tyrosine residues upon MHC-II aggregation. Dephosphorylation by PPP6C leads to inactivation and decreased production of IFN-beta. Phosphorylation at Ser-357 is also required to activate IRF3. Phosphorylation at Ser-354 by MAP3K7/TAK1 facilitates its interaction with STEEP1, promoting STING1 translocation to COPII vesicles. In terms of processing, ubiquitinated. Ubiquitinated via 'Lys-63'-linked ubiquitin chains in response to double-stranded DNA treatment, leading to relocalization to autophagosomes and subsequent degradation; this process is dependent on SQSTM1. 'Lys-63'-linked ubiquitination mediated by TRIM56 at Lys-150 promotes homodimerization and recruitment of the antiviral kinase TBK1 and subsequent production of IFN-beta. 'Lys-48'-linked polyubiquitination at Lys-150 occurring after viral infection is mediated by RNF5 and leads to proteasomal degradation. 'Lys-11'-linked polyubiquitination at Lys-150 by RNF26 leads to stabilize STING1: it protects STING1 from RNF5-mediated 'Lys-48'-linked polyubiquitination. 'Lys-33'-linked and 'Lys-48'-linked deubiquitinated by USP20; leading to its stabilization and promotion of innate antiviral response. 'Lys-48'-linked deubiquitinated by USP44; leading to its stabilization and promotion of innate antiviral response. 'Lys-63'-linked deubiquitinated by USP49; leading to inhibition of the subsequent recruitment of TBK1 to the signaling complex. 'Lys-63'-linked ubiquitination mediated by RNF39 promotes the activation of the cGAS-STING pathway. Palmitoylation takes place in the Golgi apparatus and creates a platform for the recruitment of TBK1.

It localises to the endoplasmic reticulum membrane. The protein resides in the cytoplasm. It is found in the perinuclear region. Its subcellular location is the endoplasmic reticulum-Golgi intermediate compartment membrane. The protein localises to the golgi apparatus membrane. It localises to the cytoplasmic vesicle. The protein resides in the autophagosome membrane. It is found in the mitochondrion outer membrane. Its subcellular location is the cell membrane. It catalyses the reaction H(+)(in) = H(+)(out). Facilitator of innate immune signaling that acts as a sensor of cytosolic DNA from bacteria and viruses and promotes the production of type I interferon (IFN-alpha and IFN-beta). Innate immune response is triggered in response to non-CpG double-stranded DNA from viruses and bacteria delivered to the cytoplasm. Acts by binding cyclic dinucleotides: recognizes and binds cyclic di-GMP (c-di-GMP), a second messenger produced by bacteria, cyclic UMP-AMP (2',3'-cUAMP), and cyclic GMP-AMP (cGAMP), a messenger produced by CGAS in response to DNA virus in the cytosol. Upon binding to c-di-GMP or cGAMP, STING oligomerizes, translocates from the endoplasmic reticulum and is phosphorylated by TBK1 on the pLxIS motif, leading to recruitment and subsequent activation of the transcription factor IRF3 to induce expression of type I interferon and exert a potent anti-viral state. Exhibits 2',3' phosphodiester linkage-specific ligand recognition: can bind both 2'-3' linked cGAMP (2'-3'-cGAMP) and 3'-3' linked cGAMP but is preferentially activated by 2'-3' linked cGAMP. The preference for 2'-3'-cGAMP, compared to other linkage isomers is probably due to the ligand itself, whichs adopts an organized free-ligand conformation that resembles the STING1-bound conformation and pays low energy costs in changing into the active conformation. In addition to promote the production of type I interferons, plays a direct role in autophagy. Following cGAMP-binding, STING1 buds from the endoplasmic reticulum into COPII vesicles, which then form the endoplasmic reticulum-Golgi intermediate compartment (ERGIC). The ERGIC serves as the membrane source for WIPI2 recruitment and LC3 lipidation, leading to formation of autophagosomes that target cytosolic DNA or DNA viruses for degradation by the lysosome. Promotes autophagy by acting as a proton channel that directs proton efflux from the Golgi to facilitate MAP1LC3B/LC3B lipidation. The autophagy- and interferon-inducing activities can be uncoupled and autophagy induction is independent of TBK1 phosphorylation. Autophagy is also triggered upon infection by bacteria: following c-di-GMP-binding, which is produced by live Gram-positive bacteria, promotes reticulophagy. May be involved in translocon function, the translocon possibly being able to influence the induction of type I interferons. May be involved in transduction of apoptotic signals via its association with the major histocompatibility complex class II (MHC-II). The chain is Stimulator of interferon genes protein from Bos taurus (Bovine).